The following is a 229-amino-acid chain: MSTWANLGLQDSASPLMEQLIFFHDHALLILVMITVLVGYLMFMLFFNSYVNRFLLHGQLIEMIWTILPAIILLFIAMPSLRLLYLLDEINEPSITLKSIGHQWYWSYEYSDFNNVEFDSYMIPTNELSNDGFRLLDVDNRIVLPMNSQIRILVTAADVIHSWTVPALGVKVDGTPGRLNQTNFFINRPGLFYGQCSEICGANHSFMPIVIESVPVNYFIKWISSTVNS.

Residues 1–26 (MSTWANLGLQDSASPLMEQLIFFHDH) are Mitochondrial intermembrane-facing. A helical membrane pass occupies residues 27 to 48 (ALLILVMITVLVGYLMFMLFFN). Residues 49–62 (SYVNRFLLHGQLIE) are Mitochondrial matrix-facing. The helical transmembrane segment at 63 to 82 (MIWTILPAIILLFIAMPSLR) threads the bilayer. Over 83–229 (LLYLLDEINE…IKWISSTVNS (147 aa)) the chain is Mitochondrial intermembrane. Residues H161, C196, E198, C200, H204, and M207 each contribute to the Cu cation site. Residue E198 participates in Mg(2+) binding.

Belongs to the cytochrome c oxidase subunit 2 family. In terms of assembly, component of the cytochrome c oxidase (complex IV, CIV), a multisubunit enzyme composed of a catalytic core of 3 subunits and several supernumerary subunits. The complex exists as a monomer or a dimer and forms supercomplexes (SCs) in the inner mitochondrial membrane with ubiquinol-cytochrome c oxidoreductase (cytochrome b-c1 complex, complex III, CIII). Requires Cu cation as cofactor.

It is found in the mitochondrion inner membrane. The enzyme catalyses 4 Fe(II)-[cytochrome c] + O2 + 8 H(+)(in) = 4 Fe(III)-[cytochrome c] + 2 H2O + 4 H(+)(out). Its function is as follows. Component of the cytochrome c oxidase, the last enzyme in the mitochondrial electron transport chain which drives oxidative phosphorylation. The respiratory chain contains 3 multisubunit complexes succinate dehydrogenase (complex II, CII), ubiquinol-cytochrome c oxidoreductase (cytochrome b-c1 complex, complex III, CIII) and cytochrome c oxidase (complex IV, CIV), that cooperate to transfer electrons derived from NADH and succinate to molecular oxygen, creating an electrochemical gradient over the inner membrane that drives transmembrane transport and the ATP synthase. Cytochrome c oxidase is the component of the respiratory chain that catalyzes the reduction of oxygen to water. Electrons originating from reduced cytochrome c in the intermembrane space (IMS) are transferred via the dinuclear copper A center (CU(A)) of subunit 2 and heme A of subunit 1 to the active site in subunit 1, a binuclear center (BNC) formed by heme A3 and copper B (CU(B)). The BNC reduces molecular oxygen to 2 water molecules using 4 electrons from cytochrome c in the IMS and 4 protons from the mitochondrial matrix. The sequence is that of Cytochrome c oxidase subunit 2 (mt:CoII) from Drosophila lowei (Fruit fly).